Consider the following 217-residue polypeptide: Phosphatidylinositol phosphate synthase (217 aa).

2 helical membrane-spanning segments follow: residues 28–49 (LTPDVVTILGTTASVAGALTLF) and 55–74 (FAGACVVWFFVLFDMLDGAM). Position 31–34 (31–34 (DVVT)) interacts with a CDP-1,2-diacyl-sn-glycerol. Residues Asp-68 and Asp-71 each coordinate Mg(2+). Gly-72, Arg-76, and Thr-82 together coordinate a CDP-1,2-diacyl-sn-glycerol. Mg(2+) is bound by residues Asp-89 and Asp-93. Asp-93 functions as the Proton acceptor in the catalytic mechanism. A run of 4 helical transmembrane segments spans residues 95-112 (ISDGAVFCGLLWWIAFHM), 118-136 (VIATLICLVTSQVISYIKA), 156-173 (LIIVLTGAGVSDFPFVPW), and 179-200 (VGMWLLAVASVITCVQRLHTVW).

It belongs to the CDP-alcohol phosphatidyltransferase class-I family. Homodimer. Mg(2+) is required as a cofactor.

Its subcellular location is the cell membrane. The catalysed reaction is a CDP-1,2-diacyl-sn-glycerol + 1D-myo-inositol 3-phosphate = a 1,2-diacyl-sn-glycero-3-phospho-(1D-myo-inositol-3-phosphate) + CMP + H(+). It catalyses the reaction 1,2-di-(9Z-octadecenoyl)-sn-glycero-3-cytidine-5'-diphosphate + 1D-myo-inositol 3-phosphate = 1,2-di-(9Z-octadecenoyl)-sn-glycero-3-phospho-(1D-myo-inositol-3-phosphate) + CMP + H(+). It participates in phospholipid metabolism; phosphatidylinositol phosphate biosynthesis. With respect to regulation, competitively inhibited by several inositol 1-phosphate analogs, including the phosphonate analog 1-deoxy-1-phosphonomethyl-myo-inositol (Ino-C-P). Its function is as follows. Catalyzes the conjugation of the 1'-hydroxyl group of D-myo-inositol-3-phosphate (also named L-myo-inositol-1-phosphate) with a lipid tail of cytidine diphosphate diacylglycerol (CDP-DAG), forming phosphatidylinositol phosphate (PIP) and CMP. PIP is a precursor of phosphatidylinositol (PI) which is an essential lipid for mycobacteria required for formation of their cell wall. In Mycobacterium bovis (strain BCG / Pasteur 1173P2), this protein is Phosphatidylinositol phosphate synthase.